The primary structure comprises 557 residues: 2-succinyl-5-enolpyruvyl-6-hydroxy-3-cyclohexene-1-carboxylate synthase (557 aa).

This sequence belongs to the TPP enzyme family. MenD subfamily. In terms of assembly, homodimer. Requires Mg(2+) as cofactor. Mn(2+) is required as a cofactor. The cofactor is thiamine diphosphate.

It carries out the reaction isochorismate + 2-oxoglutarate + H(+) = 5-enolpyruvoyl-6-hydroxy-2-succinyl-cyclohex-3-ene-1-carboxylate + CO2. It participates in quinol/quinone metabolism; 1,4-dihydroxy-2-naphthoate biosynthesis; 1,4-dihydroxy-2-naphthoate from chorismate: step 2/7. The protein operates within quinol/quinone metabolism; menaquinone biosynthesis. In terms of biological role, catalyzes the thiamine diphosphate-dependent decarboxylation of 2-oxoglutarate and the subsequent addition of the resulting succinic semialdehyde-thiamine pyrophosphate anion to isochorismate to yield 2-succinyl-5-enolpyruvyl-6-hydroxy-3-cyclohexene-1-carboxylate (SEPHCHC). This is 2-succinyl-5-enolpyruvyl-6-hydroxy-3-cyclohexene-1-carboxylate synthase from Serratia proteamaculans (strain 568).